Here is a 145-residue protein sequence, read N- to C-terminus: Large ribosomal subunit protein uL15 (145 aa).

Residues 1-57 (MKLNDLSPAPGSRREKHRPGRGIGSGLGKTGGRGHKGQTSRSGGTIAPGFEGGQQPL) are disordered. Over residues 21-31 (RGIGSGLGKTG) the composition is skewed to gly residues.

This sequence belongs to the universal ribosomal protein uL15 family. Part of the 50S ribosomal subunit.

Functionally, binds to the 23S rRNA. This Pseudomonas fluorescens (strain SBW25) protein is Large ribosomal subunit protein uL15.